The following is a 317-amino-acid chain: Transaldolase (317 aa).

Lysine 126 (schiff-base intermediate with substrate) is an active-site residue.

The protein belongs to the transaldolase family. Type 1 subfamily. In terms of assembly, homodimer.

It localises to the cytoplasm. It carries out the reaction D-sedoheptulose 7-phosphate + D-glyceraldehyde 3-phosphate = D-erythrose 4-phosphate + beta-D-fructose 6-phosphate. It participates in carbohydrate degradation; pentose phosphate pathway; D-glyceraldehyde 3-phosphate and beta-D-fructose 6-phosphate from D-ribose 5-phosphate and D-xylulose 5-phosphate (non-oxidative stage): step 2/3. In terms of biological role, transaldolase is important for the balance of metabolites in the pentose-phosphate pathway. This Burkholderia mallei (strain SAVP1) protein is Transaldolase.